The primary structure comprises 365 residues: Zinc finger TRAF-type-containing protein 1-A (365 aa).

Residues 1–56 (MSEEREAPGPLASSSAGLGAEVGQEEVPGGAGPARLLLLPSDSDGPPKKRLRSEAE) are disordered. Residues 72 to 117 (CTVCLDLPKASVYQCTNGHLMCAGCFIHLLADSRLKEEQATCPNCR) form an RING-type; degenerate zinc finger. The TRAF-type zinc finger occupies 113–186 (CPNCRCEISK…PWEGPYHELT (74 aa)).

Belongs to the ZFTRAF1 family.

The protein resides in the cytoplasm. The chain is Zinc finger TRAF-type-containing protein 1-A from Xenopus laevis (African clawed frog).